The chain runs to 479 residues: Sulfate adenylyltransferase subunit 1 (479 aa).

The tr-type G domain occupies 25–239; the sequence is KSLLRFLTCG…EVLETVDIQR (215 aa). The tract at residues 34–41 is G1; the sequence is GSVDDGKS. 34–41 contacts GTP; the sequence is GSVDDGKS. The segment at 92–96 is G2; that stretch reads GITID. The tract at residues 113 to 116 is G3; sequence DTPG. Residues 113-117 and 168-171 contribute to the GTP site; these read DTPGH and NKMD. Positions 168 to 171 are G4; that stretch reads NKMD. Residues 206–208 are G5; the sequence is SAL.

The protein belongs to the TRAFAC class translation factor GTPase superfamily. Classic translation factor GTPase family. CysN/NodQ subfamily. Heterodimer composed of CysD, the smaller subunit, and CysN.

It catalyses the reaction sulfate + ATP + H(+) = adenosine 5'-phosphosulfate + diphosphate. Its pathway is sulfur metabolism; hydrogen sulfide biosynthesis; sulfite from sulfate: step 1/3. Functionally, with CysD forms the ATP sulfurylase (ATPS) that catalyzes the adenylation of sulfate producing adenosine 5'-phosphosulfate (APS) and diphosphate, the first enzymatic step in sulfur assimilation pathway. APS synthesis involves the formation of a high-energy phosphoric-sulfuric acid anhydride bond driven by GTP hydrolysis by CysN coupled to ATP hydrolysis by CysD. The sequence is that of Sulfate adenylyltransferase subunit 1 from Salmonella dublin (strain CT_02021853).